Here is a 1238-residue protein sequence, read N- to C-terminus: uncharacterized protein (1238 aa).

Disordered stretches follow at residues 1 to 38 (MSSK…DISS), 122 to 156 (SSTP…RPSF), 229 to 439 (PKNN…KNKE), 660 to 1016 (KNKL…TGAA), 1051 to 1083 (EEED…KLNS), and 1098 to 1191 (KKSG…NASR). Low complexity-rich tracts occupy residues 10–26 (NKNN…NNNN), 129–149 (LSPF…QSPL), and 234–276 (QIDS…TQSQ). Polar residues predominate over residues 317–343 (ELQNQTQINKSKQDLTNISQKINITTS). The segment covering 344–361 (QHDKDDLGEYRMSEKGGG) has biased composition (basic and acidic residues). Residues 362–372 (DDGDDDDDYDN) are compositionally biased toward acidic residues. Residues 383-394 (TNKKQQQQHHHK) show a composition bias toward basic residues. A compositionally biased stretch (basic and acidic residues) spans 395–416 (GKEESQSEYYEKEKEKEKEDIA). Low complexity-rich tracts occupy residues 417 to 435 (TTRA…NNIN), 678 to 691 (QQQQ…QQQE), and 712 to 792 (QPSQ…QEKQ). The segment covering 793 to 805 (QSQEKHQSQEKHQ) has biased composition (basic and acidic residues). 2 stretches are compositionally biased toward low complexity: residues 806–859 (SQQS…SQQK) and 882–906 (SQSQ…QSQR). The segment covering 916 to 927 (ENQDSENLDDTV) has biased composition (acidic residues). Residues 929–944 (MNYNQIPSTLDHSTLQ) are compositionally biased toward polar residues. Residues 966 to 975 (EIERRRRELA) show a composition bias toward basic and acidic residues. A compositionally biased stretch (acidic residues) spans 976–990 (GEDSDEEFEILDEDQ). 2 stretches are compositionally biased toward low complexity: residues 1062–1083 (QNNN…KLNS) and 1108–1121 (SSSS…NKKN). The segment covering 1123–1133 (PQPTKSVNKPR) has biased composition (polar residues). Over residues 1142–1181 (SQNRQKQSEQQQQQPQQQPQLPQQQQQQQQQQQLRQQQNE) the composition is skewed to low complexity. The segment covering 1182-1191 (NTISSLNASR) has biased composition (polar residues).

This is an uncharacterized protein from Dictyostelium discoideum (Social amoeba).